A 189-amino-acid chain; its full sequence is Prophage DNA-packing protein NohA (189 aa).

This sequence belongs to the terminase small subunit family.

This is Prophage DNA-packing protein NohA (nohA) from Escherichia coli (strain K12).